Consider the following 223-residue polypeptide: tRNA (guanine-N(7)-)-methyltransferase (223 aa).

Asp56, Asp81, Asp108, and Asp130 together coordinate S-adenosyl-L-methionine. Residue Asp130 is part of the active site. Substrate contacts are provided by Lys134 and Asp166.

This sequence belongs to the class I-like SAM-binding methyltransferase superfamily. TrmB family.

It catalyses the reaction guanosine(46) in tRNA + S-adenosyl-L-methionine = N(7)-methylguanosine(46) in tRNA + S-adenosyl-L-homocysteine. Its pathway is tRNA modification; N(7)-methylguanine-tRNA biosynthesis. In terms of biological role, catalyzes the formation of N(7)-methylguanine at position 46 (m7G46) in tRNA. This is tRNA (guanine-N(7)-)-methyltransferase from Rubrobacter xylanophilus (strain DSM 9941 / JCM 11954 / NBRC 16129 / PRD-1).